The chain runs to 609 residues: Proteasome-associated ATPase (609 aa).

The disordered stretch occupies residues 1-22; sequence MGESERSEAFNPPREAGMSSGD. Residues 20 to 96 are a coiled coil; that stretch reads SGDIAELEQL…LREEVDRLGQ (77 aa). 296-301 provides a ligand contact to ATP; the sequence is GCGKTL. Residues 608 to 609 form a docks into pockets in the proteasome alpha-ring region; sequence YL.

This sequence belongs to the AAA ATPase family. Homohexamer. Assembles into a hexameric ring structure that caps the 20S proteasome core. Strongly interacts with the prokaryotic ubiquitin-like protein Pup through a hydrophobic interface; the interacting region of ARC lies in its N-terminal coiled-coil domain. There is one Pup binding site per ARC hexamer ring. Upon ATP-binding, the C-terminus of ARC interacts with the alpha-rings of the proteasome core, possibly by binding to the intersubunit pockets.

Its pathway is protein degradation; proteasomal Pup-dependent pathway. Functionally, ATPase which is responsible for recognizing, binding, unfolding and translocation of pupylated proteins into the bacterial 20S proteasome core particle. May be essential for opening the gate of the 20S proteasome via an interaction with its C-terminus, thereby allowing substrate entry and access to the site of proteolysis. Thus, the C-termini of the proteasomal ATPase may function like a 'key in a lock' to induce gate opening and therefore regulate proteolysis. This Mycobacterium leprae (strain Br4923) protein is Proteasome-associated ATPase.